A 65-amino-acid chain; its full sequence is Large ribosomal subunit protein bL35 (65 aa).

This sequence belongs to the bacterial ribosomal protein bL35 family.

The polypeptide is Large ribosomal subunit protein bL35 (Thermotoga petrophila (strain ATCC BAA-488 / DSM 13995 / JCM 10881 / RKU-1)).